The chain runs to 1086 residues: Fused isobutyryl-CoA mutase (1086 aa).

The 131-residue stretch at 10–140 (HVRFVTASSL…QGMINVMLEE (131 aa)) folds into the B12-binding domain. Position 23 (His23) interacts with adenosylcob(III)alamin. A GTPase chaperone MeaI region spans residues 153-407 (LERLPSGDVQ…FVALVDTINK (255 aa)). A GTP-binding site is contributed by 210-215 (GAGKSS). Positions 214, 238, 239, and 252 each coordinate Mg(2+). Arg255 is a binding site for GTP. Mg(2+) is bound by residues Glu300 and Thr301. 347–350 (NKFE) serves as a coordination point for GTP. The tract at residues 408-570 (KAGTNWKTSL…YKENVPGSFP (163 aa)) is linker. The substrate site is built by Phe578, Arg613, Arg719, Tyr763, Ser812, Arg847, and Lys852. Residues Glu964 and Asn1085 each coordinate GTP.

This sequence belongs to the IcmF family. As to quaternary structure, homodimer. The cofactor is adenosylcob(III)alamin. It depends on Mg(2+) as a cofactor.

It carries out the reaction 2-methylpropanoyl-CoA = butanoyl-CoA. The catalysed reaction is 3-methylbutanoyl-CoA = 2,2-dimethylpropanoyl-CoA. The enzyme catalyses GTP + H2O = GDP + phosphate + H(+). Catalyzes the reversible interconversion of isobutyryl-CoA and n-butyryl-CoA, and to a lesser extent, of pivalyl-CoA and isovaleryl-CoA, using radical chemistry. Also exhibits GTPase activity, associated with its G-protein domain (MeaI) that functions as a chaperone that assists cofactor delivery and proper holo-enzyme assembly. Also displays ATPase activity. Is not able to convert 3-hydroxybutyryl-CoA to 2-hydroxyisobutyryl-CoA. Does not exhibit methylmalonyl-CoA mutase (MCM) activity. This is Fused isobutyryl-CoA mutase from Geobacillus kaustophilus (strain HTA426).